The sequence spans 441 residues: Ribosomal protein uS12 methylthiotransferase RimO (441 aa).

Positions 8–118 (PKIGFVSLGC…VLEHVHHYVP (111 aa)) constitute an MTTase N-terminal domain. Positions 17, 53, 82, 150, 154, and 157 each coordinate [4Fe-4S] cluster. The Radical SAM core domain maps to 136-373 (LTPRHYAYLK…MQLQQQISAE (238 aa)). The region spanning 376 to 441 (QEKVGREILV…DEYDLWGSRV (66 aa)) is the TRAM domain.

It belongs to the methylthiotransferase family. RimO subfamily. The cofactor is [4Fe-4S] cluster.

The protein resides in the cytoplasm. The catalysed reaction is L-aspartate(89)-[ribosomal protein uS12]-hydrogen + (sulfur carrier)-SH + AH2 + 2 S-adenosyl-L-methionine = 3-methylsulfanyl-L-aspartate(89)-[ribosomal protein uS12]-hydrogen + (sulfur carrier)-H + 5'-deoxyadenosine + L-methionine + A + S-adenosyl-L-homocysteine + 2 H(+). In terms of biological role, catalyzes the methylthiolation of an aspartic acid residue of ribosomal protein uS12. This chain is Ribosomal protein uS12 methylthiotransferase RimO, found in Shigella sonnei (strain Ss046).